A 218-amino-acid polypeptide reads, in one-letter code: Calcineurin B-like protein 5 (218 aa).

EF-hand domains lie at glutamate 35 to lysine 69, lysine 70 to aspartate 105, proline 107 to glutamate 142, and alanine 151 to valine 186.

This sequence belongs to the calcineurin regulatory subunit family. As to quaternary structure, homodimer. Expressed at low levels in roots, shoots, culms, leaves and young spikelets.

Acts as a calcium sensor. CBL proteins interact with CIPK serine-threonine protein kinases. Binding of a CBL protein to the regulatory NAF domain of a CIPK protein lead to the activation of the kinase in a calcium-dependent manner. This chain is Calcineurin B-like protein 5 (CBL5), found in Oryza sativa subsp. japonica (Rice).